The following is a 356-amino-acid chain: MDTSRKIIHIDMDAFYASVEQRDHPEFRGKPLIIGGDPNKRGVVATCSYEARKFGVHSAMPTRQAAKLCPNGIFIHGNMAHYVEVSNQIREIFSRYTDIIEPLSLDEAYLDVTENKKGMKSATMVARDIQQTIYHELGLTASAGVSFNKFIAKIASDFKKPAGMTVVAPEEAEAFLEQIPVTKFYGVGKVTAEKLHRLGIETGADLKKWSEWDLIRELHKHGYHLYRHVRGRSNNIVNPHRDRKSVGKETTFEFNVLDSRILEQSLMQFAKKVEARLIKLQKHGKTVVLKLRYSDFTTITKRLTLNEYTNDANQIYQAAALLLRESYTGQDSIRLIGLTVTNLKPVYFENLRLEGL.

One can recognise a UmuC domain in the interval 7–188 (IIHIDMDAFY…IPVTKFYGVG (182 aa)). Mg(2+) contacts are provided by aspartate 11 and aspartate 106. Glutamate 107 is a catalytic residue.

It belongs to the DNA polymerase type-Y family. As to quaternary structure, monomer. Requires Mg(2+) as cofactor.

It localises to the cytoplasm. It catalyses the reaction DNA(n) + a 2'-deoxyribonucleoside 5'-triphosphate = DNA(n+1) + diphosphate. Its function is as follows. Poorly processive, error-prone DNA polymerase involved in untargeted mutagenesis. Copies undamaged DNA at stalled replication forks, which arise in vivo from mismatched or misaligned primer ends. These misaligned primers can be extended by PolIV. Exhibits no 3'-5' exonuclease (proofreading) activity. May be involved in translesional synthesis, in conjunction with the beta clamp from PolIII. The protein is DNA polymerase IV of Listeria welshimeri serovar 6b (strain ATCC 35897 / DSM 20650 / CCUG 15529 / CIP 8149 / NCTC 11857 / SLCC 5334 / V8).